We begin with the raw amino-acid sequence, 328 residues long: tRNA dimethylallyltransferase (328 aa).

Position 25-32 (25-32) interacts with ATP; the sequence is GPTAVGKT. Residue 27-32 participates in substrate binding; it reads TAVGKT. The tract at residues 50–53 is interaction with substrate tRNA; the sequence is DSMQ.

Belongs to the IPP transferase family. Monomer. It depends on Mg(2+) as a cofactor.

It carries out the reaction adenosine(37) in tRNA + dimethylallyl diphosphate = N(6)-dimethylallyladenosine(37) in tRNA + diphosphate. In terms of biological role, catalyzes the transfer of a dimethylallyl group onto the adenine at position 37 in tRNAs that read codons beginning with uridine, leading to the formation of N6-(dimethylallyl)adenosine (i(6)A). This is tRNA dimethylallyltransferase from Halothermothrix orenii (strain H 168 / OCM 544 / DSM 9562).